A 706-amino-acid polypeptide reads, in one-letter code: G2/M phase-specific E3 ubiquitin-protein ligase (706 aa).

A C2HC pre-PHD-type zinc finger spans residues 11–51; the sequence is NLACVFCRKHDDCPNKYGEKKTKEKWNLTVHYYCLLMSSGI. The segment at 79-128 adopts a PHD-type 1 zinc-finger fold; that stretch reads LKCCVCKKNGASIGCVAPRCKRSYHFPCGLQRECIFQFTGNFASFCWDHR. The PHD-type 2; degenerate zinc finger occupies 143–193; it reads PCTICLEFIEPIPSYNILRSPCCKNAWFHRDCLQVQAINAGVFFFRCTICN. A PHD-type 3 zinc finger spans residues 237 to 286; the sequence is RCRCKEGRDYNAPDSKWEIKRCQCCGSSGTHLACSSLRSWEQNWECLECR. The 328-residue stretch at 371-698 folds into the HECT domain; sequence IWNSALDAFR…IRNTLRLEKE (328 aa).

Predominantly expressed in brain, liver, kidney, testes and ovary.

It localises to the nucleus. It is found in the nucleolus. Its subcellular location is the cytoplasm. The catalysed reaction is S-ubiquitinyl-[E2 ubiquitin-conjugating enzyme]-L-cysteine + [acceptor protein]-L-lysine = [E2 ubiquitin-conjugating enzyme]-L-cysteine + N(6)-ubiquitinyl-[acceptor protein]-L-lysine.. Its pathway is protein modification; protein ubiquitination. E3 ubiquitin-protein ligase which accepts ubiquitin from an E2 ubiquitin-conjugating enzyme in the form of a thioester and then directly transfers the ubiquitin to targeted substrates. Essential in early embryonic development to prevent apoptotic death. This Homo sapiens (Human) protein is G2/M phase-specific E3 ubiquitin-protein ligase (G2E3).